The chain runs to 516 residues: Extracellular endo-inulinase inuA (516 aa).

The N-terminal stretch at 1–25 (MLNPKVAYMVWMTCLGLMLPSQAQS) is a signal peptide. Substrate is bound by residues 40–43 (WMNE), Q59, W67, and 99–100 (FT). E43 is a catalytic residue. N-linked (GlcNAc...) asparagine glycosylation is present at N109. Substrate is bound at residue 175-176 (RD). N210 carries N-linked (GlcNAc...) asparagine glycosylation. E233 lines the substrate pocket. 2 N-linked (GlcNAc...) asparagine glycosylation sites follow: N372 and N419.

It belongs to the glycosyl hydrolase 32 family.

The protein localises to the secreted. The enzyme catalyses Endohydrolysis of (2-&gt;1)-beta-D-fructosidic linkages in inulin.. Its activity is regulated as follows. Activity is stimulated by Mn(2+), Fe(2+) Ca(2+) metal ions and DTT; and inhibited by glucose, Mg(2+), Zn(2+), Cu(2+), Hg(2+), Al(3+), and Fe(3+). Functionally, endo-inulinase involved in utilization of the plant storage polymer inulin, consisting of fructooligosaccharides with a degree of polymerization (DP) value from 2 to 60. The chain is Extracellular endo-inulinase inuA (inuA) from Aspergillus niger.